The chain runs to 670 residues: DEAD-box ATP-dependent RNA helicase 16 (670 aa).

Residues 1–10 are compositionally biased toward low complexity; sequence MAAAAAASSM. The disordered stretch occupies residues 1–97; that stretch reads MAAAAAASSM…EEREVSFDEL (97 aa). Composition is skewed to basic and acidic residues over residues 18–30 and 40–49; these read AATEQEVENHDEA and NDGHTAHAAE. Residues 92 to 120 carry the Q motif motif; that stretch reads VSFDELGLDEQLKRALRKKGLDKATPIQR. The region spanning 123–306 is the Helicase ATP-binding domain; the sequence is IPLILEGKDV…KLLLHNPFIL (184 aa). 136 to 143 is a binding site for ATP; the sequence is AKTGSGKT. The DEAD box signature appears at 254–257; sequence DEAD. In terms of domain architecture, Helicase C-terminal spans 340-523; the sequence is LVLLKLELIQ…PFPLLTKNAV (184 aa). Positions 616–670 are disordered; sequence DIDKPRRRKRMGFKGGSGRSSDPLKTFSAEGKSRRRGRKERDGEQDRRKRKKVES. Positions 654–670 are enriched in basic and acidic residues; the sequence is KERDGEQDRRKRKKVES.

The protein belongs to the DEAD box helicase family. DDX56/DBP9 subfamily.

The enzyme catalyses ATP + H2O = ADP + phosphate + H(+). The sequence is that of DEAD-box ATP-dependent RNA helicase 16 from Oryza sativa subsp. japonica (Rice).